The primary structure comprises 422 residues: MDFLEIVGQIPLKGGVEISGAKNSALPILAATLLSQQEVTISALPQVADIKAMASLLQNLGAELDWFNSHTLKLCAKSLRHTEATYDLVRKMRASILVLGPLLARFKECLVSLPGGCAIGARPVDLHLKAMQQLGAEITIEQGYIHAKAAKGLKGNDILFDKISVTGTENALMAASLAKGITRIINAAKEPEIAQLCTFLQSGGVEIEGVGSSELKIRGVESDALSLKDIQIIPDRIEAGTYLCVGAITNSQLKINHIIPNHLQAITDKLIEIGFPLDIQQNSIEIYPAKKRQAFEITTKEYPGFPTDMQAQFMALATQCLGTSVIEETLFENRFMHASELQRLGANISLKTNIATIHGSTELTGSDVMATDLRASSALILAALVAKGVSRVHRIYHLDRGYERLEDKINALGAKVLRLKEK.

K22–N23 contributes to the phosphoenolpyruvate binding site. R93 provides a ligand contact to UDP-N-acetyl-alpha-D-glucosamine. C117 acts as the Proton donor in catalysis. At C117 the chain carries 2-(S-cysteinyl)pyruvic acid O-phosphothioketal. Residues R122–L126, D308, and L330 contribute to the UDP-N-acetyl-alpha-D-glucosamine site.

It belongs to the EPSP synthase family. MurA subfamily.

The protein resides in the cytoplasm. It carries out the reaction phosphoenolpyruvate + UDP-N-acetyl-alpha-D-glucosamine = UDP-N-acetyl-3-O-(1-carboxyvinyl)-alpha-D-glucosamine + phosphate. It functions in the pathway cell wall biogenesis; peptidoglycan biosynthesis. Functionally, cell wall formation. Adds enolpyruvyl to UDP-N-acetylglucosamine. This chain is UDP-N-acetylglucosamine 1-carboxyvinyltransferase, found in Helicobacter acinonychis (strain Sheeba).